Here is an 81-residue protein sequence, read N- to C-terminus: Small ribosomal subunit protein bS16 (81 aa).

The protein belongs to the bacterial ribosomal protein bS16 family.

The protein is Small ribosomal subunit protein bS16 of Neisseria gonorrhoeae (strain ATCC 700825 / FA 1090).